We begin with the raw amino-acid sequence, 916 residues long: Isoleucine--tRNA ligase (916 aa).

The 'HIGH' region signature appears at 57–67 (PYANGNLHMGH). Glu-554 provides a ligand contact to L-isoleucyl-5'-AMP. The 'KMSKS' region motif lies at 595–599 (KMSKS). Position 598 (Lys-598) interacts with ATP. The Zn(2+) site is built by Cys-885, Cys-888, Cys-905, and Cys-908.

Belongs to the class-I aminoacyl-tRNA synthetase family. IleS type 1 subfamily. Monomer. Zn(2+) serves as cofactor.

It is found in the cytoplasm. The enzyme catalyses tRNA(Ile) + L-isoleucine + ATP = L-isoleucyl-tRNA(Ile) + AMP + diphosphate. Functionally, catalyzes the attachment of isoleucine to tRNA(Ile). As IleRS can inadvertently accommodate and process structurally similar amino acids such as valine, to avoid such errors it has two additional distinct tRNA(Ile)-dependent editing activities. One activity is designated as 'pretransfer' editing and involves the hydrolysis of activated Val-AMP. The other activity is designated 'posttransfer' editing and involves deacylation of mischarged Val-tRNA(Ile). This is Isoleucine--tRNA ligase from Staphylococcus epidermidis (strain ATCC 12228 / FDA PCI 1200).